A 211-amino-acid polypeptide reads, in one-letter code: Protein-methionine-sulfoxide reductase heme-binding subunit MsrQ (211 aa).

A run of 6 helical transmembrane segments spans residues 10–30, 54–74, 82–102, 116–136, 153–173, and 178–198; these read WLKV…VWAI, FLLA…PLLI, LWCF…ELGV, PYLT…FTST, FVYL…KIIS, and IYAG…LSLF.

Belongs to the MsrQ family. As to quaternary structure, heterodimer of a catalytic subunit (MsrP) and a heme-binding subunit (MsrQ). The cofactor is FMN. It depends on heme b as a cofactor.

It is found in the cell inner membrane. Its function is as follows. Part of the MsrPQ system that repairs oxidized periplasmic proteins containing methionine sulfoxide residues (Met-O), using respiratory chain electrons. Thus protects these proteins from oxidative-stress damage caused by reactive species of oxygen and chlorine generated by the host defense mechanisms. MsrPQ is essential for the maintenance of envelope integrity under bleach stress, rescuing a wide series of structurally unrelated periplasmic proteins from methionine oxidation, including the primary periplasmic chaperone SurA and the lipoprotein Pal. MsrQ provides electrons for reduction to the reductase catalytic subunit MsrP, using the quinone pool of the respiratory chain. This is Protein-methionine-sulfoxide reductase heme-binding subunit MsrQ from Escherichia coli O6:H1 (strain CFT073 / ATCC 700928 / UPEC).